A 506-amino-acid polypeptide reads, in one-letter code: Galactose/methyl galactoside import ATP-binding protein MglA (506 aa).

ABC transporter domains lie at 14 to 249 (LEMR…VGRS) and 259 to 506 (NKPG…SLHL). Position 46 to 53 (46 to 53 (GENGAGKS)) interacts with ATP.

This sequence belongs to the ABC transporter superfamily. Galactose/methyl galactoside importer (TC 3.A.1.2.3) family. The complex is composed of one ATP-binding protein (MglA), two transmembrane proteins (MglC) and a solute-binding protein (MglB).

It localises to the cell inner membrane. It catalyses the reaction D-galactose(out) + ATP + H2O = D-galactose(in) + ADP + phosphate + H(+). The catalysed reaction is methyl beta-D-galactoside(out) + ATP + H2O = methyl beta-D-galactoside(in) + ADP + phosphate + H(+). Stimulated 3-fold by galactose and inhibited by vanadate, N-ethylmaleimide, and 5-methoxyindole-2-carboxylic acid. Functionally, part of the ABC transporter complex MglABC involved in galactose/methyl galactoside import. Responsible for energy coupling to the transport system. In Salmonella typhimurium (strain LT2 / SGSC1412 / ATCC 700720), this protein is Galactose/methyl galactoside import ATP-binding protein MglA.